The following is a 202-amino-acid chain: 3-isopropylmalate dehydratase small subunit (202 aa).

This sequence belongs to the LeuD family. LeuD type 1 subfamily. As to quaternary structure, heterodimer of LeuC and LeuD.

The enzyme catalyses (2R,3S)-3-isopropylmalate = (2S)-2-isopropylmalate. Its pathway is amino-acid biosynthesis; L-leucine biosynthesis; L-leucine from 3-methyl-2-oxobutanoate: step 2/4. Its function is as follows. Catalyzes the isomerization between 2-isopropylmalate and 3-isopropylmalate, via the formation of 2-isopropylmaleate. The protein is 3-isopropylmalate dehydratase small subunit of Nocardioides sp. (strain ATCC BAA-499 / JS614).